Reading from the N-terminus, the 322-residue chain is Protein lin-56 (322 aa).

Residues 264–322 (SSQKLQQNGFPEKVEQMDKYSNKLKDEASDKKYEKPGKKDYVEEEGYWAPITDSEDDEA) are disordered. Over residues 275–304 (EKVEQMDKYSNKLKDEASDKKYEKPGKKDY) the composition is skewed to basic and acidic residues.

In terms of tissue distribution, widely expressed throughout embryonic development. Expressed in the six multipotent ventral ectodermal blast cells, P3.p-P8.p, which generate the vulva and in their descendants throughout vulval development.

The protein resides in the nucleus. In terms of biological role, required for translation, stability and/or localization of lin-15a. This is Protein lin-56 (lin-56) from Caenorhabditis elegans.